The following is a 351-amino-acid chain: UDP-N-acetylenolpyruvoylglucosamine reductase (351 aa).

An FAD-binding PCMH-type domain is found at 11-213 (GVGGSIACFI…KQVRDQVLRI (203 aa)). Residue Arg-158 is part of the active site. The active-site Proton donor is the Ser-239. Glu-343 is a catalytic residue.

Belongs to the MurB family. Requires FAD as cofactor.

The protein resides in the cytoplasm. The enzyme catalyses UDP-N-acetyl-alpha-D-muramate + NADP(+) = UDP-N-acetyl-3-O-(1-carboxyvinyl)-alpha-D-glucosamine + NADPH + H(+). The protein operates within cell wall biogenesis; peptidoglycan biosynthesis. Its function is as follows. Cell wall formation. The polypeptide is UDP-N-acetylenolpyruvoylglucosamine reductase (Tropheryma whipplei (strain TW08/27) (Whipple's bacillus)).